The sequence spans 418 residues: Glutamyl-tRNA reductase (418 aa).

Substrate-binding positions include 49 to 52, Ser-109, 114 to 116, and Gln-120; these read TCNR and EPQ. Cys-50 functions as the Nucleophile in the catalytic mechanism. An NADP(+)-binding site is contributed by 189–194; sequence GAGETI.

This sequence belongs to the glutamyl-tRNA reductase family. As to quaternary structure, homodimer.

The enzyme catalyses (S)-4-amino-5-oxopentanoate + tRNA(Glu) + NADP(+) = L-glutamyl-tRNA(Glu) + NADPH + H(+). Its pathway is porphyrin-containing compound metabolism; protoporphyrin-IX biosynthesis; 5-aminolevulinate from L-glutamyl-tRNA(Glu): step 1/2. Its function is as follows. Catalyzes the NADPH-dependent reduction of glutamyl-tRNA(Glu) to glutamate 1-semialdehyde (GSA). In Escherichia coli O1:K1 / APEC, this protein is Glutamyl-tRNA reductase.